Consider the following 640-residue polypeptide: Scarecrow-like protein 27 (640 aa).

2 stretches are compositionally biased toward low complexity: residues 68–79 (SYSSTTTTLSSS) and 86–98 (TVTN…GDDN). Positions 68 to 98 (SYSSTTTTLSSSHGGGGTTVTNTTVTAGDDN) are disordered. The region spanning 259–639 (GMAGDDQSVI…KELVTVSAWK (381 aa)) is the GRAS domain. A leucine repeat I (LRI) region spans residues 266-331 (SVIIEQLFNA…AEALLSLIHN (66 aa)). The interval 350–422 (YRSFSETSPF…NRASSLKLTV (73 aa)) is VHIID. The short motif at 383-387 (IHIID) is the VHIID element. The leucine repeat II (LRII) stretch occupies residues 438 to 470 (FTEENLKTFAGEVKIPFEIELLSVELLLNPAYW). The tract at residues 480-565 (EAIAVNLPVN…RFWVQPSIEK (86 aa)) is PFYRE. The interval 568–639 (MKRHRWIERS…KELVTVSAWK (72 aa)) is SAW.

The protein belongs to the GRAS family. Expressed in seedlings, roots, cotyledons, leaves and flowers.

It localises to the nucleus. In terms of biological role, probable transcription factor involved in plant development. This is Scarecrow-like protein 27 (SCL27) from Arabidopsis thaliana (Mouse-ear cress).